A 582-amino-acid polypeptide reads, in one-letter code: 2-succinyl-5-enolpyruvyl-6-hydroxy-3-cyclohexene-1-carboxylate synthase (582 aa).

This sequence belongs to the TPP enzyme family. MenD subfamily. In terms of assembly, homodimer. The cofactor is Mg(2+). Requires Mn(2+) as cofactor. Thiamine diphosphate is required as a cofactor.

The enzyme catalyses isochorismate + 2-oxoglutarate + H(+) = 5-enolpyruvoyl-6-hydroxy-2-succinyl-cyclohex-3-ene-1-carboxylate + CO2. It functions in the pathway quinol/quinone metabolism; 1,4-dihydroxy-2-naphthoate biosynthesis; 1,4-dihydroxy-2-naphthoate from chorismate: step 2/7. Its pathway is cofactor biosynthesis; phylloquinone biosynthesis. Catalyzes the thiamine diphosphate-dependent decarboxylation of 2-oxoglutarate and the subsequent addition of the resulting succinic semialdehyde-thiamine pyrophosphate anion to isochorismate to yield 2-succinyl-5-enolpyruvyl-6-hydroxy-3-cyclohexene-1-carboxylate (SEPHCHC). In Prochlorococcus marinus (strain MIT 9313), this protein is 2-succinyl-5-enolpyruvyl-6-hydroxy-3-cyclohexene-1-carboxylate synthase.